A 566-amino-acid chain; its full sequence is Proline--tRNA ligase (566 aa).

This sequence belongs to the class-II aminoacyl-tRNA synthetase family. ProS type 1 subfamily. In terms of assembly, homodimer.

Its subcellular location is the cytoplasm. The enzyme catalyses tRNA(Pro) + L-proline + ATP = L-prolyl-tRNA(Pro) + AMP + diphosphate. Its function is as follows. Catalyzes the attachment of proline to tRNA(Pro) in a two-step reaction: proline is first activated by ATP to form Pro-AMP and then transferred to the acceptor end of tRNA(Pro). As ProRS can inadvertently accommodate and process non-cognate amino acids such as alanine and cysteine, to avoid such errors it has two additional distinct editing activities against alanine. One activity is designated as 'pretransfer' editing and involves the tRNA(Pro)-independent hydrolysis of activated Ala-AMP. The other activity is designated 'posttransfer' editing and involves deacylation of mischarged Ala-tRNA(Pro). The misacylated Cys-tRNA(Pro) is not edited by ProRS. The chain is Proline--tRNA ligase from Exiguobacterium sibiricum (strain DSM 17290 / CCUG 55495 / CIP 109462 / JCM 13490 / 255-15).